The following is a 465-amino-acid chain: 23S rRNA (uracil(1939)-C(5))-methyltransferase RlmD (465 aa).

The tract at residues 1 to 22 (MSEAVPTSARKSKNAPVAPGPA) is disordered. The region spanning 16-80 (PVAPGPAPVL…PSYEQATVVD (65 aa)) is the TRAM domain. [4Fe-4S] cluster is bound by residues Cys-93, Cys-99, Cys-102, and Cys-181. S-adenosyl-L-methionine is bound by residues Gln-289, Phe-318, Asn-323, Glu-339, Asn-367, and Asp-388. Cys-421 serves as the catalytic Nucleophile.

The protein belongs to the class I-like SAM-binding methyltransferase superfamily. RNA M5U methyltransferase family. RlmD subfamily.

The catalysed reaction is uridine(1939) in 23S rRNA + S-adenosyl-L-methionine = 5-methyluridine(1939) in 23S rRNA + S-adenosyl-L-homocysteine + H(+). In terms of biological role, catalyzes the formation of 5-methyl-uridine at position 1939 (m5U1939) in 23S rRNA. This Burkholderia ambifaria (strain ATCC BAA-244 / DSM 16087 / CCUG 44356 / LMG 19182 / AMMD) (Burkholderia cepacia (strain AMMD)) protein is 23S rRNA (uracil(1939)-C(5))-methyltransferase RlmD.